The primary structure comprises 650 residues: Hemocyanin subunit 2 (650 aa).

O-linked (GalNAc...) serine glycans are attached at residues S120 and S172. Positions 193, 197, and 225 each coordinate Cu cation. An N-linked (GlcNAc...) asparagine glycan is attached at N309. Cu cation is bound by residues H344, H348, and H384.

It belongs to the tyrosinase family. Hemocyanin subfamily. Hexamer of a number of different chains, of which five have been identified. Contains one N-glycosylated and three O-glycosylated residues. The position of one of the O-glycosylated residues has not been determined. Post-translationally, O-linked glycan at Ser-120 may be composed of two GalNAc, three Gal, and two N-acetylneuraminic acid units for a total 1525-Da MW. Hemolymph.

Its subcellular location is the secreted. The protein localises to the extracellular space. Hemocyanins are copper-containing oxygen carriers occurring freely dissolved in the hemolymph of many mollusks and arthropods. In Carcinus aestuarii (Green crab), this protein is Hemocyanin subunit 2.